The following is a 485-amino-acid chain: N-succinylglutamate 5-semialdehyde dehydrogenase (485 aa).

Position 220 to 225 (220 to 225 (GSANTG)) interacts with NAD(+). Catalysis depends on residues glutamate 243 and cysteine 278.

The protein belongs to the aldehyde dehydrogenase family. AstD subfamily.

It carries out the reaction N-succinyl-L-glutamate 5-semialdehyde + NAD(+) + H2O = N-succinyl-L-glutamate + NADH + 2 H(+). It functions in the pathway amino-acid degradation; L-arginine degradation via AST pathway; L-glutamate and succinate from L-arginine: step 4/5. In terms of biological role, catalyzes the NAD-dependent reduction of succinylglutamate semialdehyde into succinylglutamate. The protein is N-succinylglutamate 5-semialdehyde dehydrogenase of Vibrio cholerae serotype O1 (strain M66-2).